The primary structure comprises 95 residues: Aspartyl/glutamyl-tRNA(Asn/Gln) amidotransferase subunit C (95 aa).

This sequence belongs to the GatC family. In terms of assembly, heterotrimer of A, B and C subunits.

It catalyses the reaction L-glutamyl-tRNA(Gln) + L-glutamine + ATP + H2O = L-glutaminyl-tRNA(Gln) + L-glutamate + ADP + phosphate + H(+). The catalysed reaction is L-aspartyl-tRNA(Asn) + L-glutamine + ATP + H2O = L-asparaginyl-tRNA(Asn) + L-glutamate + ADP + phosphate + 2 H(+). In terms of biological role, allows the formation of correctly charged Asn-tRNA(Asn) or Gln-tRNA(Gln) through the transamidation of misacylated Asp-tRNA(Asn) or Glu-tRNA(Gln) in organisms which lack either or both of asparaginyl-tRNA or glutaminyl-tRNA synthetases. The reaction takes place in the presence of glutamine and ATP through an activated phospho-Asp-tRNA(Asn) or phospho-Glu-tRNA(Gln). The polypeptide is Aspartyl/glutamyl-tRNA(Asn/Gln) amidotransferase subunit C (Geotalea uraniireducens (strain Rf4) (Geobacter uraniireducens)).